A 133-amino-acid polypeptide reads, in one-letter code: Ribosome-binding factor A (133 aa).

This sequence belongs to the RbfA family. Monomer. Binds 30S ribosomal subunits, but not 50S ribosomal subunits or 70S ribosomes.

It localises to the cytoplasm. One of several proteins that assist in the late maturation steps of the functional core of the 30S ribosomal subunit. Associates with free 30S ribosomal subunits (but not with 30S subunits that are part of 70S ribosomes or polysomes). Required for efficient processing of 16S rRNA. May interact with the 5'-terminal helix region of 16S rRNA. The protein is Ribosome-binding factor A of Salmonella heidelberg (strain SL476).